A 254-amino-acid chain; its full sequence is Coiled-coil domain-containing protein 152 (254 aa).

Positions 61–246 (SIKEECATLH…LEQRLSVGKD (186 aa)) form a coiled coil.

Detected in stomach.

The chain is Coiled-coil domain-containing protein 152 (CCDC152) from Homo sapiens (Human).